The sequence spans 333 residues: 2-oxoglutarate-dependent dioxygenase ucsF (333 aa).

A Fe2OG dioxygenase domain is found at 174 to 296 (NASELRLNHY…RYSIAYLCKA (123 aa)). Fe cation contacts are provided by histidine 202, aspartate 204, and histidine 264. 2-oxoglutarate is bound at residue arginine 287.

It belongs to the iron/ascorbate-dependent oxidoreductase family. Requires Fe(2+) as cofactor.

It participates in mycotoxin biosynthesis. Its function is as follows. 2-oxoglutarate-dependent dioxygenase; part of the gene cluster that mediates the biosynthesis of UCS1025A, a member of the pyrrolizidinone family that acts as a strong telomerase inhibitor and displays potent antibacterial and antitumor properties. These compounds share a hemiaminal-containing pyrrolizidinone core fused with a gamma-lactone, giving a furopyrrolizidine that is connected to a decalin fragment. The polyketide synthase module (PKS) of the PKS-NRPS ucsA is responsible for the synthesis of the polyketide backbone via the condensation of an acetyl-CoA starter unit with 6 malonyl-CoA units. The downstream nonribosomal peptide synthetase (NRPS) module then amidates the carboxyl end of the polyketide with a 2S,3S-methylproline derived from L-isoleucine by the 2-oxoglutarate-dependent dioxygenase ucsF which converts L-isoleucine to (4S,5S)-4-methylpyrroline-5-carboxylate that is further converted to 2S,3S-methylproline by the pyrroline-5-carboxylate reductase ucsG. Reductive release of the completed aminoacyl polyketide from the assembly line can form the 3-pyrrolin-2-one structure via an intramolecular Knoevenagel reaction. Because ucsA lacks a designated enoylreductase (ER) domain, the required activity is provided the enoyl reductase ucsL. This keto acyclic precursor is the substrate of the Diels-Alderase ucsH, that catalyzes the Diels-Alder cycloaddition. Oxidation of the 3S-methyl group to a carboxylate by the cytochrome P450 monooxygenase ucsK allows an oxa-Michael cyclization that might involve the reductase/dehydrogenase ucsI and which furnishes the furopyrrolizidine. The oxidase ucsJ likely plays a critical role in stereoselective reduction of the C5-C6 double bond to afford the required R-configured carboxylate group. Further enolization and oxidation at C5 by an unidentified enzyme affords the last intermediate that can undergo oxa-Michael cyclization to yield UCS1025A. This is 2-oxoglutarate-dependent dioxygenase ucsF from Acremonium sp.